We begin with the raw amino-acid sequence, 616 residues long: Homeodomain-interacting protein kinase 4 (616 aa).

Residues 11–347 (YDIIEVLGKG…PSAALRHPFV (337 aa)) enclose the Protein kinase domain. ATP contacts are provided by residues 17–25 (LGKGTFGEV) and lysine 40. Catalysis depends on aspartate 136, which acts as the Proton acceptor. The interval 487–616 (HKARKAPAGS…SFLQHVGGHH (130 aa)) is disordered. Over residues 497-512 (KSDSNFSNLIRLSQAS) the composition is skewed to polar residues. Residue serine 512 is modified to Phosphoserine. Basic and acidic residues predominate over residues 542 to 560 (REGDGPGIKDRPMDAERPG).

Belongs to the protein kinase superfamily. CMGC Ser/Thr protein kinase family. HIPK subfamily. Autophosphorylated. Expressed at moderate levels in lung and white adipose tissues and weakly in brain and liver.

The protein resides in the cytoplasm. It catalyses the reaction L-seryl-[protein] + ATP = O-phospho-L-seryl-[protein] + ADP + H(+). The catalysed reaction is L-threonyl-[protein] + ATP = O-phospho-L-threonyl-[protein] + ADP + H(+). Protein kinase that phosphorylates murine TP53 at Ser-9, and thus induces TP53 repression of BIRC5 promoter. May act as a corepressor of transcription factors (Potential). This is Homeodomain-interacting protein kinase 4 (Hipk4) from Mus musculus (Mouse).